A 1068-amino-acid chain; its full sequence is Carbamoyl phosphate synthase large chain (1068 aa).

Residues 1–401 (MPLNKDIKKV…AFLKGTRSLE (401 aa)) form a carboxyphosphate synthetic domain region. ATP contacts are provided by Arg-129, Arg-169, Gly-175, Gly-176, Lys-208, Val-210, Glu-215, Gly-241, Ile-242, His-243, Gln-284, and Glu-298. The 195-residue stretch at 133–327 (RNVMSRINEP…IAKVASKIAL (195 aa)) folds into the ATP-grasp 1 domain. The Mg(2+) site is built by Gln-284, Glu-298, and Asn-300. Gln-284, Glu-298, and Asn-300 together coordinate Mn(2+). The tract at residues 402-549 (IGKYSLEHKK…YSTYDVYDEV (148 aa)) is oligomerization domain. The carbamoyl phosphate synthetic domain stretch occupies residues 550–932 (EVSKNKKVIV…ALYKGFIGAN (383 aa)). The region spanning 674–864 (DELLEKLKIA…IVDIATRVML (191 aa)) is the ATP-grasp 2 domain. The ATP site is built by Arg-710, Lys-749, Leu-751, Glu-755, Gly-780, Val-781, His-782, Ser-783, Gln-823, and Glu-835. The Mg(2+) site is built by Gln-823, Glu-835, and Asn-837. Residues Gln-823, Glu-835, and Asn-837 each contribute to the Mn(2+) site. In terms of domain architecture, MGS-like spans 933-1068 (ISIKKEKGTV…ETLYIFDLSN (136 aa)). The interval 933 to 1068 (ISIKKEKGTV…ETLYIFDLSN (136 aa)) is allosteric domain.

This sequence belongs to the CarB family. Composed of two chains; the small (or glutamine) chain promotes the hydrolysis of glutamine to ammonia, which is used by the large (or ammonia) chain to synthesize carbamoyl phosphate. Tetramer of heterodimers (alpha,beta)4. The cofactor is Mg(2+). Mn(2+) serves as cofactor.

It carries out the reaction hydrogencarbonate + L-glutamine + 2 ATP + H2O = carbamoyl phosphate + L-glutamate + 2 ADP + phosphate + 2 H(+). The enzyme catalyses hydrogencarbonate + NH4(+) + 2 ATP = carbamoyl phosphate + 2 ADP + phosphate + 2 H(+). Its pathway is amino-acid biosynthesis; L-arginine biosynthesis; carbamoyl phosphate from bicarbonate: step 1/1. It participates in pyrimidine metabolism; UMP biosynthesis via de novo pathway; (S)-dihydroorotate from bicarbonate: step 1/3. In terms of biological role, large subunit of the glutamine-dependent carbamoyl phosphate synthetase (CPSase). CPSase catalyzes the formation of carbamoyl phosphate from the ammonia moiety of glutamine, carbonate, and phosphate donated by ATP, constituting the first step of 2 biosynthetic pathways, one leading to arginine and/or urea and the other to pyrimidine nucleotides. The large subunit (synthetase) binds the substrates ammonia (free or transferred from glutamine from the small subunit), hydrogencarbonate and ATP and carries out an ATP-coupled ligase reaction, activating hydrogencarbonate by forming carboxy phosphate which reacts with ammonia to form carbamoyl phosphate. The polypeptide is Carbamoyl phosphate synthase large chain (Clostridium botulinum (strain Langeland / NCTC 10281 / Type F)).